A 171-amino-acid chain; its full sequence is Large ribosomal subunit protein uL10 (171 aa).

Belongs to the universal ribosomal protein uL10 family. As to quaternary structure, part of the ribosomal stalk of the 50S ribosomal subunit. The N-terminus interacts with L11 and the large rRNA to form the base of the stalk. The C-terminus forms an elongated spine to which L12 dimers bind in a sequential fashion forming a multimeric L10(L12)X complex.

In terms of biological role, forms part of the ribosomal stalk, playing a central role in the interaction of the ribosome with GTP-bound translation factors. The chain is Large ribosomal subunit protein uL10 from Paramagnetospirillum magneticum (strain ATCC 700264 / AMB-1) (Magnetospirillum magneticum).